We begin with the raw amino-acid sequence, 353 residues long: UPF0283 membrane protein YcjF (353 aa).

The segment covering 1–19 (MSEPLKPRIDFAEPLKEEP) has biased composition (basic and acidic residues). A disordered region spans residues 1–35 (MSEPLKPRIDFAEPLKEEPTSAFKAQQTFSEAESR). Transmembrane regions (helical) follow at residues 70–90 (MVMGGLALFGASVVGQGLQWT), 100–120 (VALGGCAAGALIIGAGVGSVV), and 213–233 (ESTLMIAVSPLALVDMAFIAW).

It belongs to the UPF0283 family.

It localises to the cell inner membrane. The sequence is that of UPF0283 membrane protein YcjF from Salmonella choleraesuis (strain SC-B67).